The primary structure comprises 262 residues: Spindlin-Z (262 aa).

Positions 1–50 (MKTPFGKSPGQRSRADAGHAGVSASMMKKRTSHKKHRNNVGPSKPISQPR) are disordered. Residues 27-38 (MKKRTSHKKHRN) are compositionally biased toward basic residues.

It belongs to the SPIN/STSY family. Expressed in several tissues including testis.

The protein resides in the nucleus. In terms of biological role, may play a role in mitosis. The chain is Spindlin-Z (SPINZ) from Gallus gallus (Chicken).